We begin with the raw amino-acid sequence, 504 residues long: Arabinose import ATP-binding protein AraG (504 aa).

ABC transporter domains lie at 8 to 243 and 256 to 499; these read LSFR…MVGR and YGEE…MPKV. Residue 40 to 47 participates in ATP binding; sequence GENGAGKS.

This sequence belongs to the ABC transporter superfamily. Arabinose importer (TC 3.A.1.2.2) family. As to quaternary structure, the complex is composed of two ATP-binding proteins (AraG), two transmembrane proteins (AraH) and a solute-binding protein (AraF).

It localises to the cell inner membrane. The catalysed reaction is L-arabinose(out) + ATP + H2O = L-arabinose(in) + ADP + phosphate + H(+). Its function is as follows. Part of the ABC transporter complex AraFGH involved in arabinose import. Responsible for energy coupling to the transport system. The chain is Arabinose import ATP-binding protein AraG from Escherichia coli O157:H7.